Reading from the N-terminus, the 456-residue chain is Putative gluconeogenesis factor (456 aa).

It belongs to the gluconeogenesis factor family.

Its subcellular location is the cytoplasm. Required for morphogenesis under gluconeogenic growth conditions. The chain is Putative gluconeogenesis factor from Nostoc sp. (strain PCC 7120 / SAG 25.82 / UTEX 2576).